A 545-amino-acid polypeptide reads, in one-letter code: Resolvase homolog YokA (545 aa).

The 152-residue stretch at 14 to 165 folds into the Resolvase/invertase-type recombinase catalytic domain; the sequence is NILGYLRRSR…GAKYTYAAQG (152 aa). Positions 19-46 form a coiled coil; sequence LRRSRQDMEREKRTGEDTLTEQKELMNK. The active-site O-(5'-phospho-DNA)-serine intermediate is S22. The segment at residues 173–303 is a DNA-binding region (recombinase); that stretch reads PYGYQLNKKT…VKIANKVPLL (131 aa). Residues 402–475 adopt a coiled-coil conformation; it reads NMKTKKQMSE…QDTQSEIDSN (74 aa).

This sequence in the N-terminal section; belongs to the site-specific recombinase resolvase family.

The polypeptide is Resolvase homolog YokA (yokA) (Bacillus subtilis (strain 168)).